The following is a 178-amino-acid chain: Single-stranded DNA-binding protein 2 (178 aa).

The SSB domain maps to 6–111; sequence VNKVILVGNL…VVVSQSGTMQ (106 aa). The DNA-binding element occupies 55-61; the sequence is WHRVVLY. The interval 111–161 is disordered; it reads QMLGGRNSAGSGQQQGGWGQPQQPAAPSHSGMPPQQHPANEPPMDFDDDIP.

As to quaternary structure, homotetramer.

The protein is Single-stranded DNA-binding protein 2 (ssb2) of Salmonella typhi.